A 418-amino-acid chain; its full sequence is 3-isopropylmalate dehydratase large subunit 1 (418 aa).

The [4Fe-4S] cluster site is built by cysteine 298, cysteine 358, and cysteine 361.

The protein belongs to the aconitase/IPM isomerase family. LeuC type 2 subfamily. Heterodimer of LeuC and LeuD. It depends on [4Fe-4S] cluster as a cofactor.

The catalysed reaction is (2R,3S)-3-isopropylmalate = (2S)-2-isopropylmalate. The protein operates within amino-acid biosynthesis; L-leucine biosynthesis; L-leucine from 3-methyl-2-oxobutanoate: step 2/4. Catalyzes the isomerization between 2-isopropylmalate and 3-isopropylmalate, via the formation of 2-isopropylmaleate. The chain is 3-isopropylmalate dehydratase large subunit 1 from Thermotoga maritima (strain ATCC 43589 / DSM 3109 / JCM 10099 / NBRC 100826 / MSB8).